The following is a 325-amino-acid chain: Brorin (325 aa).

An N-terminal signal peptide occupies residues 1 to 27 (MPSSTAMAVGALSSSLLVTCCLMVALC). A disordered region spans residues 37-121 (AQAPEQPGQE…RPRGDTPQAE (85 aa)). Basic and acidic residues-rich tracts occupy residues 44–56 (GQEKREHASRDGP) and 64–78 (RPARDEGGSGRDWKS). The Mediates cell adhesion signature appears at 114 to 116 (RGD). VWFC domains follow at residues 153 to 212 (KGCV…PQCK) and 216 to 274 (NYCE…PICK).

Peripherally associated with AMPAR complex. AMPAR complex consists of an inner core made of 4 pore-forming GluA/GRIA proteins (GRIA1, GRIA2, GRIA3 and GRIA4) and 4 major auxiliary subunits arranged in a twofold symmetry. One of the two pairs of distinct binding sites is occupied either by CNIH2, CNIH3 or CACNG2, CACNG3. The other harbors CACNG2, CACNG3, CACNG4, CACNG8 or GSG1L. This inner core of AMPAR complex is complemented by outer core constituents binding directly to the GluA/GRIA proteins at sites distinct from the interaction sites of the inner core constituents. Outer core constituents include at least PRRT1, PRRT2, CKAMP44/SHISA9, FRRS1L and NRN1. The proteins of the inner and outer core serve as a platform for other, more peripherally associated AMPAR constituents, including VWC2. Alone or in combination, these auxiliary subunits control the gating and pharmacology of the AMPAR complex and profoundly impact their biogenesis and protein processing.

The protein resides in the secreted. The protein localises to the extracellular space. Its subcellular location is the extracellular matrix. It localises to the basement membrane. It is found in the synapse. In terms of biological role, BMP antagonist which may play a role in neural development. Promotes cell adhesion. The polypeptide is Brorin (VWC2) (Homo sapiens (Human)).